The chain runs to 331 residues: Fructose-1,6-bisphosphatase class 1 (331 aa).

Residues E100, D120, L122, and D123 each contribute to the Mg(2+) site. Residues 123 to 126 (DGSS), N216, Y243, 261 to 263 (YLY), and K273 each bind substrate. A Mg(2+)-binding site is contributed by E279.

It belongs to the FBPase class 1 family. Homotetramer. It depends on Mg(2+) as a cofactor.

The protein localises to the cytoplasm. The catalysed reaction is beta-D-fructose 1,6-bisphosphate + H2O = beta-D-fructose 6-phosphate + phosphate. The protein operates within carbohydrate biosynthesis; gluconeogenesis. The protein is Fructose-1,6-bisphosphatase class 1 of Amoebophilus asiaticus (strain 5a2).